Reading from the N-terminus, the 994-residue chain is Phosphoenolpyruvate carboxylase (994 aa).

The interval 1–66 is disordered; the sequence is MKSSGSARAT…QGRTREDKDR (66 aa). Low complexity-rich tracts occupy residues 14-25 and 41-54; these read AVSSSSAPAHAE and AAAR…AASA. Residues histidine 204 and lysine 646 contribute to the active site.

The protein belongs to the PEPCase type 1 family. Requires Mg(2+) as cofactor.

The catalysed reaction is oxaloacetate + phosphate = phosphoenolpyruvate + hydrogencarbonate. In terms of biological role, forms oxaloacetate, a four-carbon dicarboxylic acid source for the tricarboxylic acid cycle. In Burkholderia mallei (strain NCTC 10247), this protein is Phosphoenolpyruvate carboxylase.